The primary structure comprises 324 residues: Mitochondrial oxaloacetate transport protein (324 aa).

Solcar repeat units lie at residues 20–111 (ISKF…IRSS), 126–218 (QSVG…AKNI), and 227–312 (DGPA…TMKL). A run of 6 helical transmembrane segments spans residues 26-46 (FVAGGLAACIAVTVTNPIELI), 79-99 (GIKGLQKGLNAAYIYQIGLNG), 132-152 (VFSGAASGIIGAVIGSPLFLV), 193-213 (GIDAAILRTGAGSSVQLPIYN), 233-253 (LTASTISGLGVAVVMNPWDVI), and 284-305 (LYKGFAAQVFRIAPHTIMCLTF).

This sequence belongs to the mitochondrial carrier (TC 2.A.29) family.

Its subcellular location is the mitochondrion inner membrane. It carries out the reaction a dicarboxylate(in) + sulfate(out) = a dicarboxylate(out) + sulfate(in). The catalysed reaction is (2S)-2-isopropylmalate(in) + sulfate(out) = (2S)-2-isopropylmalate(out) + sulfate(in). The enzyme catalyses (2R,3S)-3-isopropylmalate(in) + sulfate(out) = (2R,3S)-3-isopropylmalate(out) + sulfate(in). It catalyses the reaction malonate(in) + sulfate(out) = malonate(out) + sulfate(in). It carries out the reaction oxaloacetate(in) + sulfate(out) = oxaloacetate(out) + sulfate(in). The catalysed reaction is thiosulfate(in) + sulfate(out) = thiosulfate(out) + sulfate(in). Its activity is regulated as follows. Inhibited by alpha-keto isocaproate, an intermediate of leucine biosynthesis pathway. Functionally, antiporter that exchanges dicarboxylates and sulfur oxoanions across the inner membrane of mitochondria. Exports alpha-isopropylmalate from mitochondrial matrix to the cytosol, where it serves as a precursor for leucine biosynthesis. The chain is Mitochondrial oxaloacetate transport protein (OAC1) from Saccharomyces cerevisiae (strain ATCC 204508 / S288c) (Baker's yeast).